Consider the following 119-residue polypeptide: Ribosome-binding factor A (119 aa).

This sequence belongs to the RbfA family. In terms of assembly, monomer. Binds 30S ribosomal subunits, but not 50S ribosomal subunits or 70S ribosomes.

Its subcellular location is the cytoplasm. Its function is as follows. One of several proteins that assist in the late maturation steps of the functional core of the 30S ribosomal subunit. Associates with free 30S ribosomal subunits (but not with 30S subunits that are part of 70S ribosomes or polysomes). Required for efficient processing of 16S rRNA. May interact with the 5'-terminal helix region of 16S rRNA. This chain is Ribosome-binding factor A, found in Buchnera aphidicola subsp. Acyrthosiphon pisum (strain Tuc7).